The sequence spans 154 residues: Methylglyoxal synthase (154 aa).

Residues 1–154 (MELTTRTIAA…RYMQQRLDLK (154 aa)) form the MGS-like domain. Substrate-binding positions include His-19, Lys-23, 45–48 (TGTT), and 65–66 (SG). Asp-71 serves as the catalytic Proton donor/acceptor. His-98 serves as a coordination point for substrate.

This sequence belongs to the methylglyoxal synthase family.

It carries out the reaction dihydroxyacetone phosphate = methylglyoxal + phosphate. Its function is as follows. Catalyzes the formation of methylglyoxal from dihydroxyacetone phosphate. The protein is Methylglyoxal synthase of Yersinia pseudotuberculosis serotype O:1b (strain IP 31758).